Reading from the N-terminus, the 234-residue chain is Sugar fermentation stimulation protein homolog (234 aa).

The protein belongs to the SfsA family.

This chain is Sugar fermentation stimulation protein homolog, found in Shewanella frigidimarina (strain NCIMB 400).